The sequence spans 254 residues: Pimeloyl-[acyl-carrier protein] methyl ester esterase (254 aa).

Positions 14–242 (LVLLHGWGMN…ASHAPFISHP (229 aa)) constitute an AB hydrolase-1 domain. Substrate-binding positions include Trp20, 82–83 (SL), and 143–147 (FLAIQ). The active-site Nucleophile is the Ser82. Residues Asp207 and His235 contribute to the active site. Residue His235 coordinates substrate.

The protein belongs to the AB hydrolase superfamily. Carboxylesterase BioH family. In terms of assembly, monomer.

Its subcellular location is the cytoplasm. The catalysed reaction is 6-carboxyhexanoyl-[ACP] methyl ester + H2O = 6-carboxyhexanoyl-[ACP] + methanol + H(+). It functions in the pathway cofactor biosynthesis; biotin biosynthesis. Functionally, the physiological role of BioH is to remove the methyl group introduced by BioC when the pimeloyl moiety is complete. It allows to synthesize pimeloyl-ACP via the fatty acid synthetic pathway through the hydrolysis of the ester bonds of pimeloyl-ACP esters. The chain is Pimeloyl-[acyl-carrier protein] methyl ester esterase from Aeromonas hydrophila subsp. hydrophila (strain ATCC 7966 / DSM 30187 / BCRC 13018 / CCUG 14551 / JCM 1027 / KCTC 2358 / NCIMB 9240 / NCTC 8049).